The chain runs to 695 residues: Probable serine/threonine-protein kinase DDB_G0279405 (695 aa).

2 disordered regions span residues 119–138 (IVAQ…PQPQ) and 149–192 (QIPT…KRHK). The span at 124-138 (QPQPQPQPQPQPQPQ) shows a compositional bias: pro residues. Residues 149–160 (QIPTTPPQQISQ) are compositionally biased toward low complexity. The segment covering 161 to 173 (FNITGNKSPSSIG) has biased composition (polar residues). The region spanning 201–462 (YVFVRKLGKG…IAEIKSHKWT (262 aa)) is the Protein kinase domain. ATP contacts are provided by residues 207-215 (LGKGTFGKV) and Lys230. Asp329 acts as the Proton acceptor in catalysis. Residues 491 to 580 (TDHTIKPSDN…NQNQNNNNNS (90 aa)) are disordered. The segment covering 510-528 (LSSSSGGESSGIIGSSNES) has biased composition (low complexity). Residues 529 to 541 (KSMYNNVNSKQKI) are compositionally biased toward polar residues. Over residues 542–580 (QNQNQNQNQNQNQNQNQNQNQNHNQNQNQNQNQNNNNNS) the composition is skewed to low complexity.

Belongs to the protein kinase superfamily. Ser/Thr protein kinase family.

It catalyses the reaction L-seryl-[protein] + ATP = O-phospho-L-seryl-[protein] + ADP + H(+). The catalysed reaction is L-threonyl-[protein] + ATP = O-phospho-L-threonyl-[protein] + ADP + H(+). The polypeptide is Probable serine/threonine-protein kinase DDB_G0279405 (Dictyostelium discoideum (Social amoeba)).